Here is a 646-residue protein sequence, read N- to C-terminus: Hexon protein p72 (646 aa).

It belongs to the NCLDV major capsid protein family. In terms of assembly, homotrimer. The membrane-bound form, but not the cytosolic one, assembles into large complexes. Interacts with the minor capsid proteins M1249L and p17; these interactions form a rigid zipper structure that stabilizes the capsomers.

The protein localises to the virion. It is found in the host endoplasmic reticulum membrane. Its subcellular location is the host cytoplasm. The protein resides in the host cytosol. Functionally, capsid protein that self-assembles to form the pseudo-hexameric capsomers of the icosahedral capsid. The capsid is constructed of 2760 pseudo-hexameric capsomers and 12 pentameric capsomers, with a T=277 symmetry, about 200 nm in diameter. The capsid encapsulates the DNA-containing nucleoid, the core shell and the inner membrane. Plays an essential role in virion assembly. Involved in virus attachment to the host cell. The chain is Hexon protein p72 from Ornithodoros (relapsing fever ticks).